Consider the following 224-residue polypeptide: Ribonuclease HII (224 aa).

Residues 33–224 form the RNase H type-2 domain; the sequence is FHVAGVDEVG…LKERYRNDVS (192 aa). A divalent metal cation is bound by residues Asp-39, Glu-40, and Asp-131.

The protein belongs to the RNase HII family. It depends on Mn(2+) as a cofactor. Mg(2+) serves as cofactor.

The protein resides in the cytoplasm. It carries out the reaction Endonucleolytic cleavage to 5'-phosphomonoester.. Endonuclease that specifically degrades the RNA of RNA-DNA hybrids. This Bartonella tribocorum (strain CIP 105476 / IBS 506) protein is Ribonuclease HII.